Reading from the N-terminus, the 630-residue chain is Sodium-dependent serotonin transporter (630 aa).

Over 1 to 87 the chain is Cytoplasmic; it reads METTPLNSQK…ERETWGKKMD (87 aa). The interval 23 to 60 is disordered; it reads ENGVLQKGVPTTADRAEPSQISNGYSAVPSTSAGDEAS. The segment covering 41–55 has biased composition (polar residues); sequence SQISNGYSAVPSTSA. Position 47 is a phosphotyrosine (tyrosine 47). A helical transmembrane segment spans residues 88–112; sequence FLLSVIGYAVDLGNIWRFPYICYQN. Positions 94, 96, 97, 98, and 101 each coordinate Na(+). Aspartate 98 provides a ligand contact to serotonin. At 113 to 115 the chain is on the extracellular side; sequence GGG. A helical transmembrane segment spans residues 116–135; sequence AFLLPYTIMAIFGGIPLFYM. Topologically, residues 136-160 are cytoplasmic; that stretch reads ELALGQYHRNGCISIWRKICPIFKG. Residue tyrosine 142 is modified to Phosphotyrosine. The chain crosses the membrane as a helical span at residues 161 to 186; sequence IGYAICIIAFYIASYYNTIIAWALYY. Over 187 to 252 the chain is Extracellular; that stretch reads LISSLTDRLP…KGLQDLGTIS (66 aa). Cysteines 200 and 209 form a disulfide. N-linked (GlcNAc...) asparagine glycosylation is found at asparagine 208 and asparagine 217. The helical transmembrane segment at 253–271 threads the bilayer; the sequence is WQLTLCIVLIFTVIYFSIW. The Cytoplasmic portion of the chain corresponds to 272–277; sequence KGVKTS. Threonine 276 carries the phosphothreonine modification. Residues 278–297 traverse the membrane as a helical segment; that stretch reads GKVVWVTATFPYIVLSVLLV. Topologically, residues 298–324 are extracellular; sequence RGATLPGAWRGVVFYLKPNWQKLLETG. Residues 325 to 347 form a helical membrane-spanning segment; it reads VWVDAAAQIFFSLGPGFGVLLAF. Position 336 (serine 336) interacts with Na(+). Residues 348–360 are Cytoplasmic-facing; sequence ASYNKFNNNCYQD. A helical transmembrane segment spans residues 361 to 380; that stretch reads ALVTSVVNCMTSFVSGFVIF. Position 368 (asparagine 368) interacts with Na(+). Topologically, residues 381–421 are extracellular; it reads TVLGYMAEMRNEDVSEVAKDAGPSLLFITYAEAIANMPAST. A helical membrane pass occupies residues 422-443; that stretch reads FFAIIFFLMLITLGLDSTFAGL. Na(+) is bound by residues leucine 434, aspartate 437, and serine 438. Serotonin is bound at residue threonine 439. Residues 444–463 are Cytoplasmic-facing; it reads EGVITAVLDEFPHIWAKRRE. Residues 464 to 483 traverse the membrane as a helical segment; that stretch reads WFVLIVVITCVLGSLLTLTS. Residues 484–494 are Extracellular-facing; that stretch reads GGAYVVTLLEE. Serotonin contacts are provided by glutamate 494 and tyrosine 495. A helical transmembrane segment spans residues 495 to 516; sequence YATGPAVLTVALIEAVAVSWFY. The Cytoplasmic portion of the chain corresponds to 517 to 538; sequence GITQFCSDVKEMLGFSPGWFWR. A helical membrane pass occupies residues 539 to 558; the sequence is ICWVAISPLFLLFIICSFLM. The serotonin site is built by phenylalanine 556 and serine 559. The Extracellular segment spans residues 559-574; that stretch reads SPPQLRLFQYNYPHWS. A helical transmembrane segment spans residues 575 to 595; sequence IVLGYCIGMSSVICIPTYIIY. At 596 to 630 the chain is on the cytoplasmic side; sequence RLISTPGTLKERIIKSITPETPTEIPCGDIRMNAV. The interval 616–624 is interaction with RAB4A; that stretch reads TPTEIPCGD.

The protein belongs to the sodium:neurotransmitter symporter (SNF) (TC 2.A.22) family. SLC6A4 subfamily. As to quaternary structure, monomer or homooligomer. Interacts with TGFB1I1. Interacts with SEC23A, SEC24C and PATJ. Interacts with NOS1; the interaction may diminish the cell surface localization of SERT in the brain and, correspondingly, reduce serotonin reuptake. Interacts (via C-terminus) with SCAMP2; the interaction is direct and retains transporter molecules intracellularly. Interacts with filamentous actin and STX1A. Interacts (via the N-terminus) with STX1A (via the H3 domain); this interaction regulates SLC4A6 channel conductance. Interacts with ITGAV:ITGB3. Interacts (via C-terminus) with ITGB3; this interaction regulates SLC6A4 trafficking. In terms of processing, phosphorylation at Thr-276 increases 5-HT uptake and is required for cGMP-mediated SERT regulation. In terms of tissue distribution, expressed in the intestinal crypt epithelial cells and myenteric neurons of the small intestine (at protein level). Expressed in the brain.

It localises to the cell membrane. The protein resides in the endomembrane system. It is found in the endosome membrane. The protein localises to the synapse. Its subcellular location is the cell junction. It localises to the focal adhesion. The protein resides in the cell projection. It is found in the neuron projection. It carries out the reaction serotonin(out) + K(+)(in) + Na(+)(out) + H(+)(in) = serotonin(in) + K(+)(out) + Na(+)(in) + H(+)(out). Functionally, serotonin transporter that cotransports serotonin with one Na(+) ion in exchange for one K(+) ion and possibly one proton in an overall electroneutral transport cycle. Transports serotonin across the plasma membrane from the extracellular compartment to the cytosol thus limiting serotonin intercellular signaling. Essential for serotonin homeostasis in the central nervous system. In the developing somatosensory cortex, acts in glutamatergic neurons to control serotonin uptake and its trophic functions accounting for proper spatial organization of cortical neurons and elaboration of sensory circuits. In the mature cortex, acts primarily in brainstem raphe neurons to mediate serotonin uptake from the synaptic cleft back into the pre-synaptic terminal thus terminating serotonin signaling at the synapse. Modulates mucosal serotonin levels in the gastrointestinal tract through uptake and clearance of serotonin in enterocytes. Required for enteric neurogenesis and gastrointestinal reflexes. Regulates blood serotonin levels by ensuring rapid high affinity uptake of serotonin from plasma to platelets, where it is further stored in dense granules via vesicular monoamine transporters and then released upon stimulation. Mechanistically, the transport cycle starts with an outward-open conformation having Na1(+) and Cl(-) sites occupied. The binding of a second extracellular Na2(+) ion and serotonin substrate leads to structural changes to outward-occluded to inward-occluded to inward-open, where the Na2(+) ion and serotonin are released into the cytosol. Binding of intracellular K(+) ion induces conformational transitions to inward-occluded to outward-open and completes the cycle by releasing K(+) possibly together with a proton bound to Asp-98 into the extracellular compartment. Na1(+) and Cl(-) ions remain bound throughout the transport cycle. Additionally, displays serotonin-induced channel-like conductance for monovalent cations, mainly Na(+) ions. The channel activity is uncoupled from the transport cycle and may contribute to the membrane resting potential or excitability. The protein is Sodium-dependent serotonin transporter (Slc6a4) of Rattus norvegicus (Rat).